The sequence spans 299 residues: tRNA dimethylallyltransferase (299 aa).

10-17 serves as a coordination point for ATP; sequence GPTAVGKT. 12-17 is a substrate binding site; sequence TAVGKT. An interaction with substrate tRNA region spans residues 35 to 38; it reads DSQQ.

Belongs to the IPP transferase family. As to quaternary structure, monomer. Mg(2+) is required as a cofactor.

It carries out the reaction adenosine(37) in tRNA + dimethylallyl diphosphate = N(6)-dimethylallyladenosine(37) in tRNA + diphosphate. Catalyzes the transfer of a dimethylallyl group onto the adenine at position 37 in tRNAs that read codons beginning with uridine, leading to the formation of N6-(dimethylallyl)adenosine (i(6)A). The chain is tRNA dimethylallyltransferase from Streptococcus thermophilus (strain ATCC BAA-491 / LMD-9).